A 308-amino-acid chain; its full sequence is Alpha/beta hydrolase domain-containing protein WAV2 (308 aa).

Residues 6-26 (SALFYGFGGIVVAGVALLVAF) form a helical membrane-spanning segment. Catalysis depends on charge relay system residues Ser-159, Asp-243, and Arg-308.

Belongs to the serine esterase family. In terms of tissue distribution, expressed in roots, rosette leaves, stems and flowers.

Its subcellular location is the cell membrane. Functionally, involved in the regulation of root growth. Involved in the suppression of the root bending in response to touch stimuli, gravity and light. Negatively regulates stimulus-induced root bending through inhibition of root tip rotation. The sequence is that of Alpha/beta hydrolase domain-containing protein WAV2 from Arabidopsis thaliana (Mouse-ear cress).